Here is a 310-residue protein sequence, read N- to C-terminus: 4-hydroxy-3-methylbut-2-enyl diphosphate reductase (310 aa).

Cys-12 contacts [4Fe-4S] cluster. Residues His-41 and His-74 each contribute to the (2E)-4-hydroxy-3-methylbut-2-enyl diphosphate site. His-41 and His-74 together coordinate dimethylallyl diphosphate. Residues His-41 and His-74 each contribute to the isopentenyl diphosphate site. Cys-96 contributes to the [4Fe-4S] cluster binding site. His-124 provides a ligand contact to (2E)-4-hydroxy-3-methylbut-2-enyl diphosphate. His-124 is a binding site for dimethylallyl diphosphate. Isopentenyl diphosphate is bound at residue His-124. Glu-126 acts as the Proton donor in catalysis. Thr-167 provides a ligand contact to (2E)-4-hydroxy-3-methylbut-2-enyl diphosphate. Cys-197 is a binding site for [4Fe-4S] cluster. (2E)-4-hydroxy-3-methylbut-2-enyl diphosphate contacts are provided by Ser-225, Ser-226, Asn-227, and Ser-269. Dimethylallyl diphosphate is bound by residues Ser-225, Ser-226, Asn-227, and Ser-269. Isopentenyl diphosphate-binding residues include Ser-225, Ser-226, Asn-227, and Ser-269.

The protein belongs to the IspH family. [4Fe-4S] cluster is required as a cofactor.

The catalysed reaction is isopentenyl diphosphate + 2 oxidized [2Fe-2S]-[ferredoxin] + H2O = (2E)-4-hydroxy-3-methylbut-2-enyl diphosphate + 2 reduced [2Fe-2S]-[ferredoxin] + 2 H(+). It carries out the reaction dimethylallyl diphosphate + 2 oxidized [2Fe-2S]-[ferredoxin] + H2O = (2E)-4-hydroxy-3-methylbut-2-enyl diphosphate + 2 reduced [2Fe-2S]-[ferredoxin] + 2 H(+). It functions in the pathway isoprenoid biosynthesis; dimethylallyl diphosphate biosynthesis; dimethylallyl diphosphate from (2E)-4-hydroxy-3-methylbutenyl diphosphate: step 1/1. The protein operates within isoprenoid biosynthesis; isopentenyl diphosphate biosynthesis via DXP pathway; isopentenyl diphosphate from 1-deoxy-D-xylulose 5-phosphate: step 6/6. Catalyzes the conversion of 1-hydroxy-2-methyl-2-(E)-butenyl 4-diphosphate (HMBPP) into a mixture of isopentenyl diphosphate (IPP) and dimethylallyl diphosphate (DMAPP). Acts in the terminal step of the DOXP/MEP pathway for isoprenoid precursor biosynthesis. The sequence is that of 4-hydroxy-3-methylbut-2-enyl diphosphate reductase from Tolumonas auensis (strain DSM 9187 / NBRC 110442 / TA 4).